We begin with the raw amino-acid sequence, 399 residues long: PCI domain-containing protein 2 (399 aa).

The PCI domain occupies valine 210–proline 391.

Belongs to the CSN12 family.

The sequence is that of PCI domain-containing protein 2 (pcid2) from Danio rerio (Zebrafish).